The chain runs to 531 residues: Flavin-containing monooxygenase 3 (531 aa).

FAD-binding positions include 9 to 13 (GAGVS), Glu-32, 40 to 41 (LW), and 61 to 62 (NS). Residues 60-61 (TN) and 195-198 (SGCD) contribute to the NADP(+) site. Ser-401 carries the post-translational modification Phosphoserine. Residues 511–531 (YSHFLRLLAVPVLIALFLVLI) traverse the membrane as a helical segment.

This sequence belongs to the FMO family. FAD serves as cofactor. Detected in liver and kidney (at protein level). Expressed in kidney and liver. Weakly expressed in lung. Does not seem to be expressed in brain, adipose tissue, or muscle.

The protein localises to the microsome membrane. It is found in the endoplasmic reticulum membrane. The enzyme catalyses trimethylamine + NADPH + O2 = trimethylamine N-oxide + NADP(+) + H2O. It catalyses the reaction N,N-dimethylaniline + NADPH + O2 + H(+) = N,N-dimethylaniline N-oxide + NADP(+) + H2O. It carries out the reaction hypotaurine + NADPH + O2 + H(+) = taurine + NADP(+) + H2O. The catalysed reaction is (S)-nicotine + NADPH + O2 = trans-(S)-nicotine N(1')-oxide + NADP(+) + H2O. The enzyme catalyses albendazole + NADPH + O2 + H(+) = albendazole S-oxide + NADP(+) + H2O. Essential hepatic enzyme that catalyzes the oxygenation of a wide variety of nitrogen- and sulfur-containing compounds including drugs as well as dietary compounds. Plays an important role in the metabolism of trimethylamine (TMA), via the production of trimethylamine N-oxide (TMAO) metabolite. TMA is generated by the action of gut microbiota using dietary precursors such as choline, choline containing compounds, betaine or L-carnitine. By regulating TMAO concentration, FMO3 directly impacts both platelet responsiveness and rate of thrombus formation. The protein is Flavin-containing monooxygenase 3 (Fmo3) of Rattus norvegicus (Rat).